The primary structure comprises 333 residues: Complement C1q and tumor necrosis factor-related protein 9A (333 aa).

The first 19 residues, 1-19, serve as a signal peptide directing secretion; that stretch reads MRIWWLLLAIEICTGNINS. 3 consecutive Collagen-like domains span residues 24–82, 95–154, and 155–191; these read RQGH…DGKV, GSPG…PGPM, and GPIGKPGPKGEAGPTGPQGEPGVRGIRGWKGDRGEKG. Residues 24–188 are disordered; the sequence is RQGHPGIPGN…GIRGWKGDRG (165 aa). Low complexity predominate over residues 26–40; it reads GHPGIPGNPGHNGLP. Residues P31, P34, and P40 each carry the 4-hydroxyproline modification. Residues 42–57 show a composition bias toward basic and acidic residues; that stretch reads RDGRDGAKGDKGDAGE. 4-hydroxyproline occurs at positions 58, 61, and 64. The span at 69–88 shows a compositional bias: basic and acidic residues; the sequence is TSGEKGERGADGKVEAKGIK. 5-hydroxylysine occurs at positions 73 and 127. 2 O-linked (Gal...) hydroxylysine glycosylation sites follow: K73 and K127. P151, P160, and P175 each carry 4-hydroxyproline. In terms of domain architecture, C1q spans 197 to 333; that stretch reads LVLPKSAFTV…FTGFLLFSSP (137 aa).

Multimers (predominantly trimers). Interacts with ADIPOQ via the C1q domain to form a heterotrimeric complex. Interacts with CTRP9B. Forms heterotrimers and heterooligomeric complexes with CTRP9B. As to expression, expressed predominantly in adipose tissue.

It is found in the secreted. Probable adipokine. Activates AMPK, AKT, and p44/42 MAPK signaling pathways. This Homo sapiens (Human) protein is Complement C1q and tumor necrosis factor-related protein 9A (C1QTNF9).